Here is a 1582-residue protein sequence, read N- to C-terminus: SET-binding protein (1582 aa).

Disordered regions lie at residues 1–76 (MEPR…WVAG), 124–246 (ITIK…KVPA), 278–416 (LLGS…KRQS), and 446–513 (SNSE…KLSE). Residues 18-27 (EFLQGSSSRS) are compositionally biased toward polar residues. A compositionally biased stretch (basic and acidic residues) spans 57–74 (GSGRDVDCNSNADSEKWV). Polar residues-rich tracts occupy residues 126–141 (IKQS…GKNS) and 213–229 (MEWS…QNCF). Positions 278 to 298 (LLGSVVPSPSSHNSPATPSSS) are enriched in low complexity. The span at 356–365 (ETTEGKREAY) shows a compositional bias: basic and acidic residues. The span at 368-388 (DSAQEASPARQSISSVSNPEN) shows a compositional bias: polar residues. The segment covering 450-465 (GSKKDPRVPKLGKMIE) has biased composition (basic and acidic residues). Residues 575–587 (KKKRGRPKKQPLL) constitute a DNA-binding region (a.T hook 1). 2 disordered regions span residues 595-617 (GTST…RKRR) and 709-787 (RGTI…ASTE). Positions 770-787 (LSTQLGGSNGNLSPASTE) are enriched in polar residues. An N6-acetyllysine modification is found at K808. A compositionally biased stretch (polar residues) spans 845-871 (SPVSESHSEETIPSDSGIGTDNNSTSD). The disordered stretch occupies residues 845-880 (SPVSESHSEETIPSDSGIGTDNNSTSDQAEKSSESR). Residues 1007 to 1019 (KKKRGRPAKTNDT) constitute a DNA-binding region (a.T hook 2). 6 disordered regions span residues 1128 to 1155 (VGGA…DRIL), 1182 to 1215 (SGSD…VSKN), 1236 to 1265 (AKDK…TRSE), 1429 to 1461 (QRQS…RDQM), 1470 to 1489 (LPSK…EPAS), and 1507 to 1582 (EAPP…DVLP). Basic residues predominate over residues 1137 to 1150 (RLHKRKHKHKRKHK). Positions 1182–1196 (SGSDKELPLVSEKSK) are enriched in basic and acidic residues. Residues 1439 to 1448 (VKKRRGRPRK) are compositionally biased toward basic residues. Positions 1440–1452 (KKRRGRPRKQPSQ) form a DNA-binding region, a.T hook 3. Composition is skewed to pro residues over residues 1509–1533 (PPLP…PPLP) and 1546–1559 (QPPA…PQPL).

In terms of assembly, interacts with SET.

The protein localises to the nucleus. This Mus musculus (Mouse) protein is SET-binding protein (Setbp1).